The primary structure comprises 306 residues: 4-diphosphocytidyl-2-C-methyl-D-erythritol kinase (306 aa).

Residue Lys11 is part of the active site. 98–108 (PIAGGMGGGSA) serves as a coordination point for ATP. Asp140 is an active-site residue.

It belongs to the GHMP kinase family. IspE subfamily.

The catalysed reaction is 4-CDP-2-C-methyl-D-erythritol + ATP = 4-CDP-2-C-methyl-D-erythritol 2-phosphate + ADP + H(+). It functions in the pathway isoprenoid biosynthesis; isopentenyl diphosphate biosynthesis via DXP pathway; isopentenyl diphosphate from 1-deoxy-D-xylulose 5-phosphate: step 3/6. Catalyzes the phosphorylation of the position 2 hydroxy group of 4-diphosphocytidyl-2C-methyl-D-erythritol. This is 4-diphosphocytidyl-2-C-methyl-D-erythritol kinase from Leifsonia xyli subsp. xyli (strain CTCB07).